Reading from the N-terminus, the 357-residue chain is UDP-N-acetylglucosamine--N-acetylmuramyl-(pentapeptide) pyrophosphoryl-undecaprenol N-acetylglucosamine transferase (357 aa).

UDP-N-acetyl-alpha-D-glucosamine is bound by residues 15–17 (TGG), Asn123, Arg164, Ser190, and Gln284.

Belongs to the glycosyltransferase 28 family. MurG subfamily.

It is found in the cell inner membrane. It carries out the reaction di-trans,octa-cis-undecaprenyl diphospho-N-acetyl-alpha-D-muramoyl-L-alanyl-D-glutamyl-meso-2,6-diaminopimeloyl-D-alanyl-D-alanine + UDP-N-acetyl-alpha-D-glucosamine = di-trans,octa-cis-undecaprenyl diphospho-[N-acetyl-alpha-D-glucosaminyl-(1-&gt;4)]-N-acetyl-alpha-D-muramoyl-L-alanyl-D-glutamyl-meso-2,6-diaminopimeloyl-D-alanyl-D-alanine + UDP + H(+). It participates in cell wall biogenesis; peptidoglycan biosynthesis. Functionally, cell wall formation. Catalyzes the transfer of a GlcNAc subunit on undecaprenyl-pyrophosphoryl-MurNAc-pentapeptide (lipid intermediate I) to form undecaprenyl-pyrophosphoryl-MurNAc-(pentapeptide)GlcNAc (lipid intermediate II). This Synechococcus elongatus (strain ATCC 33912 / PCC 7942 / FACHB-805) (Anacystis nidulans R2) protein is UDP-N-acetylglucosamine--N-acetylmuramyl-(pentapeptide) pyrophosphoryl-undecaprenol N-acetylglucosamine transferase.